Here is an 828-residue protein sequence, read N- to C-terminus: Auxin response factor 2B (828 aa).

Residues 128–230 constitute a DNA-binding region (TF-B3); that stretch reads FCKTLTASDT…ELRVGVRRAM (103 aa). Disordered stretches follow at residues 348–397, 681–703, and 791–828; these read PDRV…GSSK, EQFQ…HSTR, and NPGT…PEDS. The span at 360-370 shows a compositional bias: pro residues; the sequence is LSPPALNPLPI. The segment covering 380-390 has biased composition (polar residues); that stretch reads VLPSSPDSSVL. In terms of domain architecture, PB1 spans 703-786; sequence RSCTKVHKQG…RKIFIYTKDE (84 aa). A compositionally biased stretch (polar residues) spans 791–806; sequence NPGTLNSKGEDNSSVA.

This sequence belongs to the ARF family. In terms of assembly, homodimers and heterodimers. As to expression, expressed in root, leaf and stem. Also expressed in flower and fruit. Expressed in flower buds about three days before opening including stamen, petal and sepal with the highest in ovary.

The protein localises to the nucleus. Its function is as follows. Auxin response factors (ARFs) are transcriptional factors that binds specifically to the DNA sequence 5'-TGTCTC-3' found in the auxin-responsive promoter elements (AuxREs). Could act as transcriptional activator or repressor. Involved in the control of fruit ripening process. Regulates expression of a number of ripening regulators, transcription factors, and ethylene biosynthesis and signaling components. May act as a transcriptional repressor of auxin-responsive genes. In Solanum lycopersicum (Tomato), this protein is Auxin response factor 2B.